A 91-amino-acid polypeptide reads, in one-letter code: MSKVGVVPLIFLVLLSIAALQNGDDPRRQRDEKQSPQGDILRSTLTKYSYNIQRRCWAGGSPCHLCSSSQVCIAPTGHPAIMCGRCVPILT.

The signal sequence occupies residues 1–23; that stretch reads MSKVGVVPLIFLVLLSIAALQNG. A propeptide spanning residues 24-55 is cleaved from the precursor; that stretch reads DDPRRQRDEKQSPQGDILRSTLTKYSYNIQRR. 3 cysteine pairs are disulfide-bonded: Cys-56-Cys-72, Cys-63-Cys-83, and Cys-66-Cys-86.

This sequence belongs to the conotoxin M superfamily. Expressed by the venom duct.

It is found in the secreted. Functionally, probable neurotoxin. The polypeptide is Conotoxin Im9.1 (Conus imperialis (Imperial cone)).